The sequence spans 335 residues: L-lactate dehydrogenase B chain (335 aa).

Residues 29–57 (GQVGMACAISILEKGLCDELALVDVVEDK) and Arg99 each bind NAD(+). Substrate contacts are provided by Arg106, Asn138, and Arg169. Residue Asn138 participates in NAD(+) binding. The active-site Proton acceptor is the His193. Substrate is bound at residue Thr248.

The protein belongs to the LDH/MDH superfamily. LDH family. Homotetramer.

Its subcellular location is the cytoplasm. The catalysed reaction is (S)-lactate + NAD(+) = pyruvate + NADH + H(+). It participates in fermentation; pyruvate fermentation to lactate; (S)-lactate from pyruvate: step 1/1. In terms of biological role, interconverts simultaneously and stereospecifically pyruvate and lactate with concomitant interconversion of NADH and NAD(+). This chain is L-lactate dehydrogenase B chain (LDHB), found in Sceloporus undulatus (Eastern fence lizard).